The following is a 166-amino-acid chain: NAD(P)H-quinone oxidoreductase subunit I, chloroplastic (166 aa).

4Fe-4S ferredoxin-type domains follow at residues 55–84 and 95–124; these read GRIH…VDWK and LNYS…MTEE. [4Fe-4S] cluster is bound by residues cysteine 64, cysteine 67, cysteine 70, cysteine 74, cysteine 104, cysteine 107, cysteine 110, and cysteine 114.

The protein belongs to the complex I 23 kDa subunit family. In terms of assembly, NDH is composed of at least 16 different subunits, 5 of which are encoded in the nucleus. It depends on [4Fe-4S] cluster as a cofactor.

Its subcellular location is the plastid. It localises to the chloroplast thylakoid membrane. The enzyme catalyses a plastoquinone + NADH + (n+1) H(+)(in) = a plastoquinol + NAD(+) + n H(+)(out). It catalyses the reaction a plastoquinone + NADPH + (n+1) H(+)(in) = a plastoquinol + NADP(+) + n H(+)(out). NDH shuttles electrons from NAD(P)H:plastoquinone, via FMN and iron-sulfur (Fe-S) centers, to quinones in the photosynthetic chain and possibly in a chloroplast respiratory chain. The immediate electron acceptor for the enzyme in this species is believed to be plastoquinone. Couples the redox reaction to proton translocation, and thus conserves the redox energy in a proton gradient. The polypeptide is NAD(P)H-quinone oxidoreductase subunit I, chloroplastic (Raillardella argentea (Silky raillardella)).